The primary structure comprises 343 residues: Oxygen-dependent coproporphyrinogen-III oxidase (343 aa).

A substrate-binding site is contributed by Ser99. A divalent metal cation is bound by residues His103 and His113. The Proton donor role is filled by His113. 115 to 117 (NYR) provides a ligand contact to substrate. Positions 147 and 177 each coordinate a divalent metal cation. The segment at 267–302 (YVEFNLVWDRGTIFGLQTNGRTESILMSLPPLARWE) is important for dimerization.

It belongs to the aerobic coproporphyrinogen-III oxidase family. In terms of assembly, homodimer. A divalent metal cation is required as a cofactor.

It localises to the cytoplasm. It catalyses the reaction coproporphyrinogen III + O2 + 2 H(+) = protoporphyrinogen IX + 2 CO2 + 2 H2O. It participates in porphyrin-containing compound metabolism; protoporphyrin-IX biosynthesis; protoporphyrinogen-IX from coproporphyrinogen-III (O2 route): step 1/1. In terms of biological role, involved in the heme and chlorophyll biosynthesis. Catalyzes the aerobic oxidative decarboxylation of propionate groups of rings A and B of coproporphyrinogen-III to yield the vinyl groups in protoporphyrinogen-IX. The sequence is that of Oxygen-dependent coproporphyrinogen-III oxidase from Prochlorococcus marinus (strain SARG / CCMP1375 / SS120).